The following is a 185-amino-acid chain: Elongation factor P (185 aa).

The protein belongs to the elongation factor P family.

The protein localises to the cytoplasm. It functions in the pathway protein biosynthesis; polypeptide chain elongation. Involved in peptide bond synthesis. Stimulates efficient translation and peptide-bond synthesis on native or reconstituted 70S ribosomes in vitro. Probably functions indirectly by altering the affinity of the ribosome for aminoacyl-tRNA, thus increasing their reactivity as acceptors for peptidyl transferase. The polypeptide is Elongation factor P (Tropheryma whipplei (strain TW08/27) (Whipple's bacillus)).